The chain runs to 281 residues: Nucleotide-binding protein Daro_0070 (281 aa).

ATP is bound at residue 8–15 (GLSGSGKS). 57–60 (DARS) serves as a coordination point for GTP.

The protein belongs to the RapZ-like family.

Its function is as follows. Displays ATPase and GTPase activities. The chain is Nucleotide-binding protein Daro_0070 from Dechloromonas aromatica (strain RCB).